Here is a 304-residue protein sequence, read N- to C-terminus: Beta-lactamase-like protein str6 (304 aa).

The protein belongs to the beta-lactamase family.

It participates in mycotoxin biosynthesis. Its function is as follows. Beta-lactamase-like protein; part of the gene cluster that mediates the biosynthesis of strobilurin A, an antifungal polyketide that contains a key beta-methoxyacrylate toxophore that targets the complex III of the mitochondrial electron transport chain. Strobilurin biosynthesis begins with construction of benzoyl CoA by step-wise elimination of ammonia from phenylalanine by the phenylalanine ammonia-lyase str11, oxygenation by str8 and retro-Claisen reaction to form benzoic acid, which is activated to its CoA thiolester benzoyl CoA by the dedicated CoA ligase str10. Benzoyl CoA forms the starter unit for the highly reducing polyketide synthase stpks1 that produces the polyketide prestrobilutin A. The FAD-dependent oxygenase str9 then catalyzes the key oxidative rearrangement responsible for the creation of the beta-methoxyacrylate toxophore. Str9 performs epoxidation of the 2,3 olefin of prestrobilutin A, followed by Meinwald rearrangement to furnish the aldehyde intermediate. Rapid enolization of the aldehyde intermediate would give the beta-methoxyacrylate skeleton and methylations catalyzed by str2 and str3 complete the synthesis and lead to the production of strobilurin A. The short-chain dehydrogenase stl2 and the dehydrogenase str4 play a role in the shunt pathway leading to the production of bolineol. The cluster encodes no obvious halogenase gene that could be involved in production of strobilurin B, nor any obvious dimethylallyl-transferase that could be involved in the production of strobilurin G. It is possible that unknown proteins encoded in, or near, the cluster (such as str1 or stl1) may form new classes of halogenases or dimethylally-transferases, or that the responsible genes are located elsewhere on the genome. Similarly, proteins encoded by str5/str6 hydrolases appear to have no chemical role in the biosynthesis of strobilurin A. Finally, no obvious self-resistance gene is found within the cluster. The polypeptide is Beta-lactamase-like protein str6 (Strobilurus tenacellus).